The sequence spans 409 residues: Lissencephaly-1 homolog (409 aa).

One can recognise a LisH domain in the interval Arg7 to Asn39. A coiled-coil region spans residues Thr54–Ala81. WD repeat units follow at residues Gly104–Lys145, Gly146–Lys185, Gly189–Thr228, Gly231–Glu270, Glu273–Thr332, Gly335–Thr374, and Ala377–Arg409.

The protein belongs to the WD repeat LIS1/nudF family.

It is found in the cytoplasm. Its subcellular location is the cytoskeleton. The protein localises to the microtubule organizing center. The protein resides in the centrosome. Functionally, positively regulates the activity of the minus-end directed microtubule motor protein dynein. May enhance dynein-mediated microtubule sliding by targeting dynein to the microtubule plus end. Required for several dynein- and microtubule-dependent processes. This Aedes aegypti (Yellowfever mosquito) protein is Lissencephaly-1 homolog.